A 1178-amino-acid chain; its full sequence is DNA-directed RNA polymerase I subunit 2 (1178 aa).

Residues 1097–1137 form a C4-type zinc finger; it reads CSLCGSLLTSSVVNVQQKKLIQEIGKLPPGRTPKKVTCYSC.

The protein belongs to the RNA polymerase beta chain family. Component of the RNA polymerase I (Pol I) complex consisting of at least 13 subunits.

The protein resides in the nucleus. It catalyses the reaction RNA(n) + a ribonucleoside 5'-triphosphate = RNA(n+1) + diphosphate. Its function is as follows. DNA-dependent RNA polymerase catalyzes the transcription of DNA into RNA using the four ribonucleoside triphosphates as substrates. Second largest core component of RNA polymerase I which synthesizes ribosomal RNA precursors. Proposed to contribute to the polymerase catalytic activity and forms the polymerase active center together with the largest subunit. Pol I is composed of mobile elements and NRPA2 is part of the core element with the central large cleft and probably a clamp element that moves to open and close the cleft. Functionally, essential for the completion of the three rounds of mitosis in female megaspores required for the development of mature gametophytes. The polypeptide is DNA-directed RNA polymerase I subunit 2 (Arabidopsis thaliana (Mouse-ear cress)).